The sequence spans 284 residues: Ribosomal RNA small subunit methyltransferase A (284 aa).

Positions 12, 14, 47, 68, 93, and 118 each coordinate S-adenosyl-L-methionine.

This sequence belongs to the class I-like SAM-binding methyltransferase superfamily. rRNA adenine N(6)-methyltransferase family. RsmA subfamily.

The protein localises to the cytoplasm. The enzyme catalyses adenosine(1518)/adenosine(1519) in 16S rRNA + 4 S-adenosyl-L-methionine = N(6)-dimethyladenosine(1518)/N(6)-dimethyladenosine(1519) in 16S rRNA + 4 S-adenosyl-L-homocysteine + 4 H(+). In terms of biological role, specifically dimethylates two adjacent adenosines (A1518 and A1519) in the loop of a conserved hairpin near the 3'-end of 16S rRNA in the 30S particle. May play a critical role in biogenesis of 30S subunits. The polypeptide is Ribosomal RNA small subunit methyltransferase A (Synechocystis sp. (strain ATCC 27184 / PCC 6803 / Kazusa)).